A 186-amino-acid polypeptide reads, in one-letter code: Interferon lambda-3 (186 aa).

Residues 1 to 21 (MVCYGVTIILVGTLGSLLVGA) form the signal peptide. 3 disulfide bridges follow: C31-C128, C65-C160, and C178-C185.

It belongs to the lambda interferon family.

It is found in the secreted. Its function is as follows. Cytokine which plays a critical role in the antiviral host defense, predominantly in the epithelial tissues. Acts as a ligand for the heterodimeric class II cytokine receptor composed of IL10RB and IFNLR1, and receptor engagement leads to the activation of the JAK/STAT signaling pathway resulting in the expression of IFN-stimulated genes (ISG), which mediate the antiviral state. Has a restricted receptor distribution and therefore restricted targets: is primarily active in epithelial cells and this cell type-selective action is because of the epithelial cell-specific expression of its receptor IFNLR1. Exhibits antiviral activity against the H5N1 influenza A virus. Induces the expression of the antiviral MX protein in epithelial-rich tissues, such as intestine, trachea and lung. The protein is Interferon lambda-3 (IFNL3) of Gallus gallus (Chicken).